The chain runs to 429 residues: Adenylosuccinate synthetase (429 aa).

GTP is bound by residues 12 to 18 (GDEGKGK) and 40 to 42 (GHT). Asp-13 acts as the Proton acceptor in catalysis. The Mg(2+) site is built by Asp-13 and Gly-40. IMP-binding positions include 13–16 (DEGK), 38–41 (NAGH), Thr-128, Arg-142, Gln-223, Thr-238, and Arg-302. His-41 acts as the Proton donor in catalysis. 298–304 (ATTGRKR) is a substrate binding site. GTP is bound by residues Arg-304, 330–332 (KLD), and 412–414 (GTG).

Belongs to the adenylosuccinate synthetase family. As to quaternary structure, homodimer. The cofactor is Mg(2+).

The protein localises to the cytoplasm. The enzyme catalyses IMP + L-aspartate + GTP = N(6)-(1,2-dicarboxyethyl)-AMP + GDP + phosphate + 2 H(+). Its pathway is purine metabolism; AMP biosynthesis via de novo pathway; AMP from IMP: step 1/2. Plays an important role in the de novo pathway of purine nucleotide biosynthesis. Catalyzes the first committed step in the biosynthesis of AMP from IMP. The chain is Adenylosuccinate synthetase from Tropheryma whipplei (strain TW08/27) (Whipple's bacillus).